The primary structure comprises 540 residues: MTLKSLPAWTALQSHFEQIRHARLRDWFAPENDRAPTRAERFTIPGGGLAADFSKNRIDDETLRLLVQLARDAGVEARRDAMFAGEIVNPTEGRAALHTALRATDPQAPFHAQVSAERAKMATFARAVRSGTWTGYTGKRIRHVINIGIGGSDLGPKMVVHALHHVATPEISTHFVSNVDGADLARVLEQVDPEETLAIIVSKTFTTLETMTNARSLRDWFVARGCPEDALAKHFVGVSANPAEVVKFGIAADNVFEMWDWVGGRYSLWSAVGLSIMIAIGPEQFDELLAGANDMDRHFREAPLERNLPVLLGLIGIWYRNFFGSQSYLVAPYSEALHYLPSYLQQLEMESNGKSARLDGTFVDYPTSAVTWGEPGTNGQHAFFQMLHQGPTIVPIDFIAVLTPEHPLASHHPKLLANCFAQSEALMLGRTLEEARKVAGPGKEALAPHLTFPGNRPTTTLLVDALTPRTLGALIALYEHKVLVQATVWDINPFDQWGVELGKILGKVVEADLSAESVDPAKHDSSTTALIERARAALKR.

Catalysis depends on glutamate 350, which acts as the Proton donor. Active-site residues include histidine 381 and lysine 503.

Belongs to the GPI family.

It localises to the cytoplasm. The catalysed reaction is alpha-D-glucose 6-phosphate = beta-D-fructose 6-phosphate. It functions in the pathway carbohydrate biosynthesis; gluconeogenesis. Its pathway is carbohydrate degradation; glycolysis; D-glyceraldehyde 3-phosphate and glycerone phosphate from D-glucose: step 2/4. Its function is as follows. Catalyzes the reversible isomerization of glucose-6-phosphate to fructose-6-phosphate. This is Glucose-6-phosphate isomerase from Burkholderia orbicola (strain MC0-3).